Reading from the N-terminus, the 667-residue chain is Beta-galactosidase LacA (667 aa).

Residue Arg109 participates in substrate binding. A Zn(2+)-binding site is contributed by Cys113. A substrate-binding site is contributed by Asn147. Glu148 serves as the catalytic Proton donor. Residues Cys153, Cys155, and Cys158 each contribute to the Zn(2+) site. The active-site Nucleophile is the Glu307. Substrate is bound by residues Trp315 and 355 to 358 (EKFH).

This sequence belongs to the glycosyl hydrolase 42 family.

The enzyme catalyses Hydrolysis of terminal non-reducing beta-D-galactose residues in beta-D-galactosides.. Hydrolyzes lactose, oNP-galactoside (oNPG), pNP-galactosidase (pNPG), pNP-mannoside, pNP-glucoside, pNP-fucoside, pNP-N-acetylglucosamide, but not pNP-arabinoside or 4-methylumbelliferyl-beta-galactopyranoside (MUG). Transgalactosylates lactose at 10 g/L, but not at 270 g/L. The polypeptide is Beta-galactosidase LacA (Lactobacillus acidophilus).